The following is a 210-amino-acid chain: MIATTRDREGATMITFRLRLPCRTILRVFSRNPLVRGTDRLEAVVMLLAVTVSLLTIPFAAAAGTAVQDSRSHVYAHQAQTRHPATATVIDHEGVIDSNTTATSAPPRTKITVPARWVVNGIERSGEVNAKPGTKSGDRVGIWVDSAGQLVDEPAPPARAIADAALAALGLWLSVAAVAGALLALTRAILIRVRNASWQHDIDSLFCTQR.

2 consecutive transmembrane segments (helical) span residues 43–63 (AVVMLLAVTVSLLTIPFAAAA) and 165–185 (ALAALGLWLSVAAVAGALLAL).

It is found in the cell membrane. The sequence is that of Probable membrane protein Rv1733c from Mycobacterium tuberculosis (strain ATCC 25618 / H37Rv).